Consider the following 360-residue polypeptide: Phospho-N-acetylmuramoyl-pentapeptide-transferase (360 aa).

A run of 10 helical transmembrane segments spans residues 27 to 47 (ILSI…LIAW), 73 to 93 (TMGG…WADL), 94 to 114 (TNPY…VGFV), 132 to 152 (WKYF…YAYG), 168 to 188 (VMPQ…VGTS), 199 to 219 (GLAI…AWAT), 236 to 256 (ASEL…FLWF), 263 to 283 (VFMG…IAVL), 288 to 308 (FLLV…ILQV), and 338 to 358 (VIVR…ATLK).

This sequence belongs to the glycosyltransferase 4 family. MraY subfamily. Mg(2+) is required as a cofactor.

The protein localises to the cell inner membrane. The enzyme catalyses UDP-N-acetyl-alpha-D-muramoyl-L-alanyl-gamma-D-glutamyl-meso-2,6-diaminopimeloyl-D-alanyl-D-alanine + di-trans,octa-cis-undecaprenyl phosphate = di-trans,octa-cis-undecaprenyl diphospho-N-acetyl-alpha-D-muramoyl-L-alanyl-D-glutamyl-meso-2,6-diaminopimeloyl-D-alanyl-D-alanine + UMP. It functions in the pathway cell wall biogenesis; peptidoglycan biosynthesis. In terms of biological role, catalyzes the initial step of the lipid cycle reactions in the biosynthesis of the cell wall peptidoglycan: transfers peptidoglycan precursor phospho-MurNAc-pentapeptide from UDP-MurNAc-pentapeptide onto the lipid carrier undecaprenyl phosphate, yielding undecaprenyl-pyrophosphoryl-MurNAc-pentapeptide, known as lipid I. The polypeptide is Phospho-N-acetylmuramoyl-pentapeptide-transferase (Aliivibrio fischeri (strain MJ11) (Vibrio fischeri)).